We begin with the raw amino-acid sequence, 61 residues long: Metallothionein-2 (61 aa).

N-acetylmethionine is present on methionine 1. A beta region spans residues 1-29 (MDPNCSCAAGGSCTCAGSCKCKECRCTSC). A divalent metal cation contacts are provided by cysteine 5, cysteine 7, cysteine 13, cysteine 15, cysteine 19, cysteine 21, cysteine 24, cysteine 26, cysteine 29, cysteine 33, cysteine 34, cysteine 36, cysteine 37, cysteine 41, cysteine 44, cysteine 48, cysteine 50, and cysteine 57. The alpha stretch occupies residues 30–61 (KKSCCSCCPVGCAKCAQGCICKGASDKCSCCA). Residue serine 58 is modified to Phosphoserine. A divalent metal cation-binding residues include cysteine 59 and cysteine 60.

Belongs to the metallothionein superfamily. Type 1 family. Interacts with EOLA1.

Metallothioneins have a high content of cysteine residues that bind various heavy metals; these proteins are transcriptionally regulated by both heavy metals and glucocorticoids. This Canis lupus familiaris (Dog) protein is Metallothionein-2 (MT2A).